Reading from the N-terminus, the 68-residue chain is U-reduvitoxin-Pr3a (68 aa).

The N-terminal stretch at 1–22 is a signal peptide; it reads MKAGMKLVLVLVIASIALLALA. 3 cysteine pairs are disulfide-bonded: C29–C47, C36–C52, and C46–C59.

The protein belongs to the venom Ptu1-like knottin family. As to expression, expressed by the venom gland.

Its subcellular location is the secreted. Its function is as follows. Binds reversibly and blocks P/Q-type voltage-gated calcium channels (Cav). This chain is U-reduvitoxin-Pr3a, found in Platymeris rhadamanthus (Red spot assassin bug).